The primary structure comprises 134 residues: ATP synthase epsilon chain (134 aa).

This sequence belongs to the ATPase epsilon chain family. As to quaternary structure, F-type ATPases have 2 components, CF(1) - the catalytic core - and CF(0) - the membrane proton channel. CF(1) has five subunits: alpha(3), beta(3), gamma(1), delta(1), epsilon(1). CF(0) has three main subunits: a, b and c.

The protein localises to the cell membrane. Produces ATP from ADP in the presence of a proton gradient across the membrane. This is ATP synthase epsilon chain from Staphylococcus saprophyticus subsp. saprophyticus (strain ATCC 15305 / DSM 20229 / NCIMB 8711 / NCTC 7292 / S-41).